A 337-amino-acid chain; its full sequence is MADRYILAVESSCDETSVAVLKNEKELLSNIIASQVESHKRFGGVVPEVASRHHVEVVTLCIKDALSEAGIVAEQLDAVAVTYGPGLVGALLVGMAAAKAFAWAHGLPLIPVNHMAGHLMAAREVQELEYPLLALLVSGGHTELVYVSEPGNYKIVGETRDDAVGEAYDKVGRVMGLTYPAGREIDELAHKGKDVYDFPRAMIKEDHLEFSFSGLKSAFINLHHNAEQKGEVLVTEDLCASFQAAVLDILLAKTKKALERYPVKTLVVAGGVAANQGLRERLAEEITDVDVVIPPLRLCGDNAGMIALAAAIECDKKHFADLDLNAKPSLAFAGFEE.

Fe cation is bound by residues His-114 and His-118. Residues 136 to 140, Asp-169, Gly-182, Asp-186, and Asn-275 contribute to the substrate site; that span reads LVSGG. Residue Asp-301 participates in Fe cation binding.

It belongs to the KAE1 / TsaD family. It depends on Fe(2+) as a cofactor.

The protein resides in the cytoplasm. The catalysed reaction is L-threonylcarbamoyladenylate + adenosine(37) in tRNA = N(6)-L-threonylcarbamoyladenosine(37) in tRNA + AMP + H(+). Required for the formation of a threonylcarbamoyl group on adenosine at position 37 (t(6)A37) in tRNAs that read codons beginning with adenine. Is involved in the transfer of the threonylcarbamoyl moiety of threonylcarbamoyl-AMP (TC-AMP) to the N6 group of A37, together with TsaE and TsaB. TsaD likely plays a direct catalytic role in this reaction. The sequence is that of tRNA N6-adenosine threonylcarbamoyltransferase from Streptococcus thermophilus (strain CNRZ 1066).